Consider the following 416-residue polypeptide: Phosphatidylinositol 5-phosphate 4-kinase type-2 beta (416 aa).

Ser2 is modified (N-acetylserine). Residue Thr8 is modified to Phosphothreonine. The residue at position 19 (Ser19) is a Phosphoserine. One can recognise a PIPK domain in the interval 38–415 (ASEPILSVLM…RFNEFMSNIL (378 aa)). The segment at 64–70 (VMLMPDD) is required for interaction with PIP5K1A. Lys94 and Lys150 each carry N6-acetyllysine. Residues 202–204 (RNV) and Lys214 contribute to the ATP site. GTP-binding positions include 203–204 (NV) and Lys214. A Phosphothreonine modification is found at Thr322. Ser326 carries the post-translational modification Phosphoserine. Asp369 serves as a coordination point for GTP.

As to quaternary structure, homodimer. Binds TNFRSF1A. Interacts with PIP4K2A; the interaction suppresses ubiquitination by the SPOP/CUL3 complex. Probably interacts with PIP5K1A; the interaction inhibits PIP5K1A kinase activity. Post-translationally, ubiquitinated by the SPOP/CUL3 complex. Ubiquitination is stimulated by PtdIns5P levels. In terms of processing, phosphorylated on serine residues.

It is found in the endoplasmic reticulum membrane. The protein localises to the cell membrane. The protein resides in the nucleus. Its subcellular location is the cytoplasm. The catalysed reaction is a 1,2-diacyl-sn-glycero-3-phospho-(1D-myo-inositol-5-phosphate) + ATP = a 1,2-diacyl-sn-glycero-3-phospho-(1D-myo-inositol-4,5-bisphosphate) + ADP + H(+). It catalyses the reaction 1,2-dihexadecanoyl-sn-glycero-3-phospho-(1D-myo-inositol-5-phosphate) + ATP = 1,2-dihexadecanoyl-sn-glycero-3-phospho-(1D-myo-inositol-4,5-bisphosphate) + ADP + H(+). It carries out the reaction 1,2-dihexadecanoyl-sn-glycero-3-phospho-(1D-myo-inositol-5-phosphate) + GTP = 1,2-dihexadecanoyl-sn-glycero-3-phospho-(1D-myo-inositol-4,5-bisphosphate) + GDP + H(+). In terms of biological role, participates in the biosynthesis of phosphatidylinositol 4,5-bisphosphate. Preferentially utilizes GTP, rather than ATP, for PI(5)P phosphorylation and its activity reflects changes in direct proportion to the physiological GTP concentration. Its GTP-sensing activity is critical for metabolic adaptation. PIP4Ks negatively regulate insulin signaling through a catalytic-independent mechanism. They interact with PIP5Ks and suppress PIP5K-mediated PtdIns(4,5)P2 synthesis and insulin-dependent conversion to PtdIns(3,4,5)P3. This Rattus norvegicus (Rat) protein is Phosphatidylinositol 5-phosphate 4-kinase type-2 beta.